Reading from the N-terminus, the 541-residue chain is Tetratricopeptide repeat protein 8 (541 aa).

One copy of the TPR 1 repeat lies at 14–47; the sequence is YFRRRKFQLCADLCTQMLEKSPYDQEPDPELPVH. The tract at residues 118–137 is disordered; that stretch reads PITGFLRPSTQSGRPGTMEQ. TPR repeat units lie at residues 251 to 284, 285 to 317, 318 to 351, 352 to 385, 386 to 419, 423 to 456, and 457 to 490; these read WWWK…QEMV, DTFL…FPGE, VTLL…DNTH, VEAI…GIYN, GQLF…AENE, ADVW…NNNH, and AEAY…APHM.

Part of BBSome complex, that contains BBS1, BBS2, BBS4, BBS5, BBS7, BBS8/TTC8, BBS9 and BBIP10. Interacts with PCM1. Interacts with CCDC28B. Interacts with PKD1. In terms of tissue distribution, widely expressed.

The protein localises to the cytoplasm. The protein resides in the cytoskeleton. It is found in the microtubule organizing center. Its subcellular location is the centrosome. It localises to the cell projection. The protein localises to the cilium membrane. The protein resides in the centriolar satellite. It is found in the cilium. Functionally, the BBSome complex is thought to function as a coat complex required for sorting of specific membrane proteins to the primary cilia. The BBSome complex is required for ciliogenesis but is dispensable for centriolar satellite function. This ciliogenic function is mediated in part by the Rab8 GDP/GTP exchange factor, which localizes to the basal body and contacts the BBSome. Rab8(GTP) enters the primary cilium and promotes extension of the ciliary membrane. Firstly the BBSome associates with the ciliary membrane and binds to RAB3IP/Rabin8, the guanosyl exchange factor (GEF) for Rab8 and then the Rab8-GTP localizes to the cilium and promotes docking and fusion of carrier vesicles to the base of the ciliary membrane. The BBSome complex, together with the LTZL1, controls SMO ciliary trafficking and contributes to the sonic hedgehog (SHH) pathway regulation. Required for proper BBSome complex assembly and its ciliary localization. This Homo sapiens (Human) protein is Tetratricopeptide repeat protein 8 (TTC8).